The sequence spans 495 residues: Polybrominated aromatic compounds synthase (495 aa).

Position 437 (C437) interacts with heme.

The protein belongs to the cytochrome P450 family. Heme is required as a cofactor.

Cytochrome P450 protein involved in the biosynthesis of polybrominated aromatic organic compounds. In the presence of ferredoxin, ferredoxin reductase and NADH, catalyzes the coupling of bromophenols and bromopyrroles, forming various polybrominated biphenyls and hydroxylated polybrominated diphenyl ethers (OH-BDE). Can also mediate the heterocoupling of 3,5-dibromocatechol, forming six different compounds, including polybrominated dibenzo-p-dioxins, which are among the most toxic molecules known to man. The polypeptide is Polybrominated aromatic compounds synthase (Marinomonas mediterranea (strain ATCC 700492 / JCM 21426 / NBRC 103028 / MMB-1)).